Reading from the N-terminus, the 103-residue chain is Nematocin (103 aa).

Positions 1–19 (MGSSPILLVLAISIGLASA) are cleaved as a signal peptide. A disulfide bond links Cys-20 and Cys-25. Tyr-30 carries the tyrosine amide modification. A propeptide spanning residues 31–103 (GRTIRCSSCG…QGGCQTSAMC (73 aa)) is cleaved from the precursor.

Belongs to the vasopressin/oxytocin family. In terms of tissue distribution, detected in thermosensory AFD neurons, neurosecretory NSM cells, AVK interneurons, pharyngeal neuron M5, and the mechanosensory DVA neuron. Detected in male-specific CP motor neurons.

It localises to the secreted. Functionally, ligand for the G-protein coupled receptor ntr-1. Plays a role in gustatory associative learning. Also plays a role in male mating behavior. This Caenorhabditis elegans protein is Nematocin.